A 517-amino-acid polypeptide reads, in one-letter code: Ribonuclease Y (517 aa).

The helical transmembrane segment at 3-23 (AILYVIVAVIALILGGAAGVA) threads the bilayer. One can recognise a KH domain in the interval 207–292 (TVTVVSLPND…EMVEKAQKEV (86 aa)). The HD domain occupies 333-426 (VLKHSIEVAH…VAAADAISAA (94 aa)).

The protein belongs to the RNase Y family.

It is found in the cell membrane. Its function is as follows. Endoribonuclease that initiates mRNA decay. The chain is Ribonuclease Y from Symbiobacterium thermophilum (strain DSM 24528 / JCM 14929 / IAM 14863 / T).